The following is a 136-amino-acid chain: Preprocaerulein type I' (136 aa).

Positions 1–26 (MFKGILLCVLFAVLSANPLSQPEGFA) are cleaved as a signal peptide. Positions 27–136 (DEERDVRGLA…NALGGAPQQR (110 aa)) are excised as a propeptide. The interval 82–101 (GAPQQREANDERRFADDEDD) is disordered.

This sequence belongs to the gastrin/cholecystokinin family. As to expression, expressed by the skin glands.

It localises to the secreted. The pharmacological activities of caerulein are quite similar to the physiological activities of gastrin and related peptides. This Xenopus laevis (African clawed frog) protein is Preprocaerulein type I'.